The primary structure comprises 149 residues: NPC intracellular cholesterol transporter 2 (149 aa).

The first 21 residues, 1-21 (MRLLVAAFLLLALGDLGPGGA), serve as a signal peptide directing secretion. Intrachain disulfides connect cysteine 27/cysteine 140, cysteine 42/cysteine 47, and cysteine 93/cysteine 99. Asparagine 58 carries N-linked (GlcNAc...) asparagine glycosylation. The residue at position 116 (lysine 116) is an N6-acetyllysine.

This sequence belongs to the NPC2 family. Interacts with NPC1 (via the second lumenal domain) in a cholestrol-dependent manner. Interacts with NUS1/NgBR, the interaction stabilizes NCP2 and regulates cholesterol trafficking. Interacts with DHDDS. Interacts with NEDD4L (via C2 domain). Interacts with NPC1L1. As to expression, epididymis. High levels are found in the caput and corpus regions. Weaker levels in the distal cauda and in the efferent ducts.

It is found in the secreted. The protein resides in the endoplasmic reticulum. Its subcellular location is the lysosome. The catalysed reaction is cholesterol(in) = cholesterol(out). In terms of biological role, intracellular cholesterol transporter which acts in concert with NPC1 and plays an important role in the egress of cholesterol from the lysosomal compartment. Unesterified cholesterol that has been released from LDLs in the lumen of the late endosomes/lysosomes is transferred by NPC2 to the cholesterol-binding pocket in the N-terminal domain of NPC1. May bind and mobilize cholesterol that is associated with membranes. NPC2 binds cholesterol with a 1:1 stoichiometry. Can bind a variety of sterols, including lathosterol, desmosterol and the plant sterols stigmasterol and beta-sitosterol. The secreted form of NCP2 regulates biliary cholesterol secretion via stimulation of ABCG5/ABCG8-mediated cholesterol transport. In Canis lupus familiaris (Dog), this protein is NPC intracellular cholesterol transporter 2.